Consider the following 202-residue polypeptide: 3-isopropylmalate dehydratase small subunit (202 aa).

The protein belongs to the LeuD family. LeuD type 1 subfamily. As to quaternary structure, heterodimer of LeuC and LeuD.

It catalyses the reaction (2R,3S)-3-isopropylmalate = (2S)-2-isopropylmalate. The protein operates within amino-acid biosynthesis; L-leucine biosynthesis; L-leucine from 3-methyl-2-oxobutanoate: step 2/4. Catalyzes the isomerization between 2-isopropylmalate and 3-isopropylmalate, via the formation of 2-isopropylmaleate. This chain is 3-isopropylmalate dehydratase small subunit, found in Nocardioides sp. (strain ATCC BAA-499 / JS614).